A 316-amino-acid chain; its full sequence is Cuticle collagen 7 (316 aa).

The signal sequence occupies residues 1-34 (MSSATFLSVMAGLSGIVVFGALISVFHIYSDINS). Disordered regions lie at residues 78–269 (KQSQ…DAAY) and 281–316 (HRNV…HVQA). The segment covering 79–90 (QSQCNCGQQASN) has biased composition (polar residues). 3 triple-helical region regions span residues 94–126 (GPPG…AGPS), 139–198 (GLPG…PGKS), and 204–263 (GLPG…DGTP). Low complexity-rich tracts occupy residues 110–125 (QPGQ…VAGP), 137–147 (PQGLPGPAGVP), and 177–198 (AGSA…PGKS). Residues 209-221 (SGAPGPQGPPGAP) show a composition bias toward pro residues. Positions 241–260 (PNGQPGHPGQDGQPGAPGND) are enriched in low complexity.

It belongs to the cuticular collagen family. In terms of assembly, collagen polypeptide chains are complexed within the cuticle by disulfide bonds and other types of covalent cross-links.

Its function is as follows. Nematode cuticles are composed largely of collagen-like proteins. The cuticle functions both as an exoskeleton and as a barrier to protect the worm from its environment. This is Cuticle collagen 7 (col-7) from Caenorhabditis elegans.